We begin with the raw amino-acid sequence, 331 residues long: L-lactate dehydrogenase A chain (331 aa).

NAD(+) is bound by residues 29–57 (GMVGMASAISILLKDLCDELAMVDVMEDK) and R98. Substrate is bound by residues R105, N137, and R168. NAD(+) is bound at residue N137. H192 serves as the catalytic Proton acceptor. T247 lines the substrate pocket.

Belongs to the LDH/MDH superfamily. LDH family. In terms of assembly, homotetramer.

The protein resides in the cytoplasm. The catalysed reaction is (S)-lactate + NAD(+) = pyruvate + NADH + H(+). It functions in the pathway fermentation; pyruvate fermentation to lactate; (S)-lactate from pyruvate: step 1/1. Functionally, interconverts simultaneously and stereospecifically pyruvate and lactate with concomitant interconversion of NADH and NAD(+). This Patagonotothen tessellata (Black southern cod) protein is L-lactate dehydrogenase A chain (ldha).